Consider the following 149-residue polypeptide: Ribonuclease H (149 aa).

In terms of domain architecture, RNase H type-1 spans 1 to 142 (MSDSVELFTD…ADQLANRGVD (142 aa)). The Mg(2+) site is built by D10, E48, D70, and D134.

Belongs to the RNase H family. In terms of assembly, monomer. Mg(2+) serves as cofactor.

Its subcellular location is the cytoplasm. It carries out the reaction Endonucleolytic cleavage to 5'-phosphomonoester.. Functionally, endonuclease that specifically degrades the RNA of RNA-DNA hybrids. In Pseudomonas savastanoi pv. phaseolicola (strain 1448A / Race 6) (Pseudomonas syringae pv. phaseolicola (strain 1448A / Race 6)), this protein is Ribonuclease H.